The sequence spans 73 residues: Sec-independent protein translocase protein TatA (73 aa).

Residues 1 to 21 (MGSFSIWHWLIVLVIVMLVFG) form a helical membrane-spanning segment. Residues 44–73 (KSAEDPNEQIPQSTTTAEKTVDVQAKDINK) form a disordered region. A compositionally biased stretch (polar residues) spans 52–61 (QIPQSTTTAE). Basic and acidic residues predominate over residues 62–73 (KTVDVQAKDINK).

The protein belongs to the TatA/E family. The Tat system comprises two distinct complexes: a TatABC complex, containing multiple copies of TatA, TatB and TatC subunits, and a separate TatA complex, containing only TatA subunits. Substrates initially bind to the TatABC complex, which probably triggers association of the separate TatA complex to form the active translocon.

It localises to the cell inner membrane. Functionally, part of the twin-arginine translocation (Tat) system that transports large folded proteins containing a characteristic twin-arginine motif in their signal peptide across membranes. TatA could form the protein-conducting channel of the Tat system. This chain is Sec-independent protein translocase protein TatA, found in Polynucleobacter asymbioticus (strain DSM 18221 / CIP 109841 / QLW-P1DMWA-1) (Polynucleobacter necessarius subsp. asymbioticus).